The following is a 1068-amino-acid chain: Self-sufficient cytochrome P450 monooxygenase CYP505U2 (1068 aa).

Cysteine 408 is a heme binding site. The disordered stretch occupies residues 464–498 (TTAGMVPESVQSLRQAQKSGKPGNSKSSANESMVG). Residues 472–498 (SVQSLRQAQKSGKPGNSKSSANESMVG) are compositionally biased toward polar residues. The Flavodoxin-like domain maps to 505 to 646 (VSIFYGSNSG…DLEKWEESIL (142 aa)). FMN contacts are provided by residues 511–515 (SNSGS) and 590–622 (VFGCGHHDWATTFYKIPILIDELLEQRGAQRVA). The region spanning 679 to 909 (KEFLEATVTS…RRSNPAFHPP (231 aa)) is the FAD-binding FR-type domain.

In the N-terminal section; belongs to the cytochrome P450 family. Requires FAD as cofactor. FMN serves as cofactor. It depends on heme as a cofactor.

It carries out the reaction 2 oxidized [cytochrome P450] + NADPH = 2 reduced [cytochrome P450] + NADP(+) + H(+). It catalyses the reaction an organic molecule + reduced [NADPH--hemoprotein reductase] + O2 = an alcohol + oxidized [NADPH--hemoprotein reductase] + H2O + H(+). The enzyme catalyses dodecanoate + reduced [NADPH--hemoprotein reductase] + O2 = 3-hydroxydodecanoate + oxidized [NADPH--hemoprotein reductase] + H2O + H(+). The catalysed reaction is dodecanoate + reduced [NADPH--hemoprotein reductase] + O2 = 7-hydroxydodecanoate + oxidized [NADPH--hemoprotein reductase] + H2O + H(+). It carries out the reaction dodecan-1-ol + reduced [NADPH--hemoprotein reductase] + O2 = 1,4-dodecanediol + oxidized [NADPH--hemoprotein reductase] + H2O + H(+). It catalyses the reaction dodecan-1-ol + reduced [NADPH--hemoprotein reductase] + O2 = 1,3-dodecanediol + oxidized [NADPH--hemoprotein reductase] + H2O + H(+). Functionally, self-sufficient cytochrome P450 monooxygenase that catalyzes the regioselective in-chain hydroxylation of alkanes, fatty alcohols, and fatty acids. Preferentially hydroxylates 1-dodecanol at C3 and C4 (positions omega-8 and omega-9). It is very likely that CYP505U2 prefers dodecanol, and probably other fatty alcohols, over fatty acids as substrates. Does not show any significant activity toward tetradecanoic acid. In Exserohilum turcicum (strain 28A) (Northern leaf blight fungus), this protein is Self-sufficient cytochrome P450 monooxygenase CYP505U2.